The primary structure comprises 264 residues: Major prion protein (264 aa).

The first 24 residues, 1–24 (MVKSHIGSWILVLFVAMWSDVGLC), serve as a signal peptide directing secretion. An interaction with GRB2, ERI3 and SYN1 region spans residues 25–241 (KKRPKPGGGW…ESEAYYQRGA (217 aa)). The tract at residues 28–118 (PKPGGGWNTG…QWNKPSKPKT (91 aa)) is disordered. A run of 6 repeats spans residues 54 to 62 (SQGGGGWGQ), 63 to 70 (PHGGGWGQ), 71 to 78 (PHGGGWGQ), 79 to 86 (PHGGGWGQ), 87 to 94 (PHGGGWGQ), and 95 to 103 (PHGGGGWGQ). The interval 54-103 (SQGGGGWGQPHGGGWGQPHGGGWGQPHGGGWGQPHGGGWGQPHGGGGWGQ) is 6 X 8 AA tandem repeats of P-H-G-G-G-W-G-Q. Residues 55–107 (QGGGGWGQPHGGGWGQPHGGGWGQPHGGGWGQPHGGGWGQPHGGGGWGQGGTH) show a composition bias toward gly residues. Residues His72, Gly73, Gly74, His80, Gly81, Gly82, His88, Gly89, Gly90, His96, Gly98, and Gly99 each coordinate Cu(2+). Cys190 and Cys225 are disulfide-bonded. 2 N-linked (GlcNAc...) asparagine glycosylation sites follow: Asn192 and Asn208. Residue Ala241 is the site of GPI-anchor amidated alanine attachment. The propeptide at 242 to 264 (SVILFSSPPVILLISFLIFLIVG) is removed in mature form.

Belongs to the prion family. As to quaternary structure, monomer and homodimer. Has a tendency to aggregate into amyloid fibrils containing a cross-beta spine, formed by a steric zipper of superposed beta-strands. Soluble oligomers may represent an intermediate stage on the path to fibril formation. Copper binding may promote oligomerization. Interacts with GRB2, APP, ERI3/PRNPIP and SYN1. Mislocalized cytosolically exposed PrP interacts with MGRN1; this interaction alters MGRN1 subcellular location and causes lysosomal enlargement. Interacts with KIAA1191.

The protein resides in the cell membrane. It is found in the golgi apparatus. In terms of biological role, its primary physiological function is unclear. Has cytoprotective activity against internal or environmental stresses. May play a role in neuronal development and synaptic plasticity. May be required for neuronal myelin sheath maintenance. May play a role in iron uptake and iron homeostasis. Soluble oligomers are toxic to cultured neuroblastoma cells and induce apoptosis (in vitro). Association with GPC1 (via its heparan sulfate chains) targets PRNP to lipid rafts. Also provides Cu(2+) or Zn(2+) for the ascorbate-mediated GPC1 deaminase degradation of its heparan sulfate side chains. The sequence is that of Major prion protein (PRNP) from Tragelaphus imberbis (Lesser kudu).